The following is a 186-amino-acid chain: Peptidyl-tRNA hydrolase (186 aa).

Position 14 (Tyr14) interacts with tRNA. His19 acts as the Proton acceptor in catalysis. TRNA is bound by residues Phe64, Asn66, and Asn112.

Belongs to the PTH family. As to quaternary structure, monomer.

It is found in the cytoplasm. It catalyses the reaction an N-acyl-L-alpha-aminoacyl-tRNA + H2O = an N-acyl-L-amino acid + a tRNA + H(+). Its function is as follows. Hydrolyzes ribosome-free peptidyl-tRNAs (with 1 or more amino acids incorporated), which drop off the ribosome during protein synthesis, or as a result of ribosome stalling. In terms of biological role, catalyzes the release of premature peptidyl moieties from peptidyl-tRNA molecules trapped in stalled 50S ribosomal subunits, and thus maintains levels of free tRNAs and 50S ribosomes. This chain is Peptidyl-tRNA hydrolase, found in Mycoplasma mycoides subsp. mycoides SC (strain CCUG 32753 / NCTC 10114 / PG1).